Reading from the N-terminus, the 351-residue chain is Uroporphyrinogen decarboxylase (351 aa).

Substrate is bound by residues Arg-27–Arg-31, Asp-77, Tyr-154, Thr-209, and His-327.

This sequence belongs to the uroporphyrinogen decarboxylase family. As to quaternary structure, homodimer.

It localises to the cytoplasm. It carries out the reaction uroporphyrinogen III + 4 H(+) = coproporphyrinogen III + 4 CO2. The protein operates within porphyrin-containing compound metabolism; protoporphyrin-IX biosynthesis; coproporphyrinogen-III from 5-aminolevulinate: step 4/4. Its function is as follows. Catalyzes the decarboxylation of four acetate groups of uroporphyrinogen-III to yield coproporphyrinogen-III. The protein is Uroporphyrinogen decarboxylase of Thioalkalivibrio sulfidiphilus (strain HL-EbGR7).